Here is a 368-residue protein sequence, read N- to C-terminus: DNA replication and repair protein RecF (368 aa).

30–37 (GDNGAGKT) lines the ATP pocket.

This sequence belongs to the RecF family.

Its subcellular location is the cytoplasm. Functionally, the RecF protein is involved in DNA metabolism; it is required for DNA replication and normal SOS inducibility. RecF binds preferentially to single-stranded, linear DNA. It also seems to bind ATP. The polypeptide is DNA replication and repair protein RecF (Xanthomonas campestris pv. campestris (strain 8004)).